The chain runs to 154 residues: SsrA-binding protein (154 aa).

The disordered stretch occupies residues 126–154; the sequence is GKKKYDKREDMKKKEAQREVERAFRERQK. The span at 131 to 154 shows a compositional bias: basic and acidic residues; the sequence is DKREDMKKKEAQREVERAFRERQK.

Belongs to the SmpB family.

Its subcellular location is the cytoplasm. Its function is as follows. Required for rescue of stalled ribosomes mediated by trans-translation. Binds to transfer-messenger RNA (tmRNA), required for stable association of tmRNA with ribosomes. tmRNA and SmpB together mimic tRNA shape, replacing the anticodon stem-loop with SmpB. tmRNA is encoded by the ssrA gene; the 2 termini fold to resemble tRNA(Ala) and it encodes a 'tag peptide', a short internal open reading frame. During trans-translation Ala-aminoacylated tmRNA acts like a tRNA, entering the A-site of stalled ribosomes, displacing the stalled mRNA. The ribosome then switches to translate the ORF on the tmRNA; the nascent peptide is terminated with the 'tag peptide' encoded by the tmRNA and targeted for degradation. The ribosome is freed to recommence translation, which seems to be the essential function of trans-translation. This Anoxybacillus flavithermus (strain DSM 21510 / WK1) protein is SsrA-binding protein.